Consider the following 838-residue polypeptide: Ribonucleoside-diphosphate reductase large subunit (838 aa).

The region spanning 6–97 (KLVTKRDGSV…VTALHKTTTE (92 aa)) is the ATP-cone domain. ATP-binding positions include 10-11 (KR), 16-22 (EPYDEKV), threonine 58, and aspartate 62. Serine 227 lines the GDP pocket. Cysteine 228 and cysteine 454 are disulfide-bonded. DTTP-binding positions include 236 to 238 (DSI), lysine 253, arginine 266, and 273 to 274 (AG). A GDP-binding site is contributed by asparagine 437. Residue asparagine 437 is the Proton acceptor of the active site. Cysteine 439 functions as the Cysteine radical intermediate in the catalytic mechanism. Residues glutamate 441 and 626–629 (TAST) contribute to the GDP site. Glutamate 441 serves as the catalytic Proton acceptor. Over residues 780–794 (KELPKPDKQSKEEVH) the composition is skewed to basic and acidic residues. The tract at residues 780-838 (KELPKPDKQSKEEVHGSVGRGKRKRVGEKPTANHSNAGAPNLNGPPDTDGDGGCLNCGS) is disordered.

The protein belongs to the ribonucleoside diphosphate reductase large chain family. In terms of assembly, heterodimer of a large and a small subunit.

It catalyses the reaction a 2'-deoxyribonucleoside 5'-diphosphate + [thioredoxin]-disulfide + H2O = a ribonucleoside 5'-diphosphate + [thioredoxin]-dithiol. The catalysed reaction is dCDP + [thioredoxin]-disulfide + H2O = CDP + [thioredoxin]-dithiol. Under complex allosteric control mediated by deoxynucleoside triphosphates and ATP binding to separate specificity and activation sites on the large subunit. The type of nucleotide bound at the specificity site determines substrate preference. It seems probable that ATP makes the enzyme reduce CDP and UDP, dGTP favors ADP reduction and dTTP favors GDP reduction. Stimulated by ATP and inhibited by dATP binding to the activity site. Functionally, provides the precursors necessary for DNA synthesis. Catalyzes the rate limiting step in the de novo synthesis of deoxyribonucleotides by directly reducing ribonucleotides to the corresponding deoxyribonucleotides. This chain is Ribonucleoside-diphosphate reductase large subunit (RNR1), found in Trypanosoma brucei brucei.